The following is a 155-amino-acid chain: SsrA-binding protein (155 aa).

A disordered region spans residues 135–155 (KRESLKRRQDQRDIQRAMKNY).

This sequence belongs to the SmpB family.

Its subcellular location is the cytoplasm. Its function is as follows. Required for rescue of stalled ribosomes mediated by trans-translation. Binds to transfer-messenger RNA (tmRNA), required for stable association of tmRNA with ribosomes. tmRNA and SmpB together mimic tRNA shape, replacing the anticodon stem-loop with SmpB. tmRNA is encoded by the ssrA gene; the 2 termini fold to resemble tRNA(Ala) and it encodes a 'tag peptide', a short internal open reading frame. During trans-translation Ala-aminoacylated tmRNA acts like a tRNA, entering the A-site of stalled ribosomes, displacing the stalled mRNA. The ribosome then switches to translate the ORF on the tmRNA; the nascent peptide is terminated with the 'tag peptide' encoded by the tmRNA and targeted for degradation. The ribosome is freed to recommence translation, which seems to be the essential function of trans-translation. The sequence is that of SsrA-binding protein from Trichormus variabilis (strain ATCC 29413 / PCC 7937) (Anabaena variabilis).